The sequence spans 255 residues: Protein C activator (255 aa).

Positions 1–18 (MVLIRVLANLLILHLSYA) are cleaved as a signal peptide. Residues 19-24 (QKSSEL) constitute a propeptide that is removed on maturation. The 222-residue stretch at 25 to 246 (VIGGDECNIN…YTDWIQSIIS (222 aa)) folds into the Peptidase S1 domain. 6 disulfides stabilise this stretch: cysteine 31/cysteine 162, cysteine 49/cysteine 65, cysteine 97/cysteine 253, cysteine 141/cysteine 207, cysteine 173/cysteine 186, and cysteine 197/cysteine 222. An N-linked (GlcNAc...) asparagine glycan is attached at asparagine 45. Residue histidine 64 is the Charge relay system of the active site. The N-linked (GlcNAc...) asparagine glycan is linked to asparagine 102. The Charge relay system role is filled by aspartate 109. Asparagine 153 is a glycosylation site (N-linked (GlcNAc...) asparagine). Catalysis depends on serine 201, which acts as the Charge relay system.

This sequence belongs to the peptidase S1 family. Snake venom subfamily. In terms of assembly, monomer. As to expression, expressed by the venom gland.

The protein resides in the secreted. Snake venom serine protease that selectively cleaves the heavy chain of protein C (PROC). This activation is thrombomodulin-independent. This chain is Protein C activator, found in Agkistrodon piscivorus leucostoma (Western cottonmouth).